We begin with the raw amino-acid sequence, 92 residues long: Small ribosomal subunit protein bS20 (92 aa).

Residues 1–23 form a disordered region; it reads MANTPSAKKRAKQAEKRRSHNAS. Residues 7–20 show a composition bias toward basic residues; the sequence is AKKRAKQAEKRRSH.

The protein belongs to the bacterial ribosomal protein bS20 family.

Functionally, binds directly to 16S ribosomal RNA. The sequence is that of Small ribosomal subunit protein bS20 from Pseudomonas entomophila (strain L48).